The chain runs to 82 residues: Photosystem I iron-sulfur center (82 aa).

2 consecutive 4Fe-4S ferredoxin-type domains span residues 2–31 and 40–69; these read AHTVKIYDTCIGCTQCVRACPTDVLEMVPW and IAAAPRTEDCVGCKRCETACPTDFLSIRVY. 8 residues coordinate [4Fe-4S] cluster: cysteine 11, cysteine 14, cysteine 17, cysteine 21, cysteine 49, cysteine 52, cysteine 55, and cysteine 59.

As to quaternary structure, the cyanobacterial PSI reaction center is composed of one copy each of PsaA,B,C,D,E,F,I,J,K,L,M and X, and forms trimeric complexes. [4Fe-4S] cluster serves as cofactor.

It localises to the cellular thylakoid membrane. The catalysed reaction is reduced [plastocyanin] + hnu + oxidized [2Fe-2S]-[ferredoxin] = oxidized [plastocyanin] + reduced [2Fe-2S]-[ferredoxin]. Apoprotein for the two 4Fe-4S centers FA and FB of photosystem I (PSI); essential for photochemical activity. FB is the terminal electron acceptor of PSI, donating electrons to ferredoxin. The C-terminus interacts with PsaA/B/D and helps assemble the protein into the PSI complex. Required for binding of PsaD and PsaE to PSI. PSI is a plastocyanin/cytochrome c6-ferredoxin oxidoreductase, converting photonic excitation into a charge separation, which transfers an electron from the donor P700 chlorophyll pair to the spectroscopically characterized acceptors A0, A1, FX, FA and FB in turn. In Synechococcus sp. (strain JA-3-3Ab) (Cyanobacteria bacterium Yellowstone A-Prime), this protein is Photosystem I iron-sulfur center.